Reading from the N-terminus, the 67-residue chain is Large ribosomal subunit protein bL35 (67 aa).

It belongs to the bacterial ribosomal protein bL35 family.

The polypeptide is Large ribosomal subunit protein bL35 (Rhizorhabdus wittichii (strain DSM 6014 / CCUG 31198 / JCM 15750 / NBRC 105917 / EY 4224 / RW1) (Sphingomonas wittichii)).